We begin with the raw amino-acid sequence, 353 residues long: Protein O-mannose kinase (353 aa).

The Cytoplasmic portion of the chain corresponds to methionine 1 to serine 19. Residues leucine 20 to leucine 40 traverse the membrane as a helical; Signal-anchor for type II membrane protein segment. Residues glycine 41 to leucine 353 are Lumenal-facing. One can recognise a Protein kinase domain in the interval valine 83–leucine 353. 2 N-linked (GlcNAc...) asparagine glycosylation sites follow: asparagine 163 and asparagine 237.

Belongs to the protein kinase superfamily. Ser/Thr protein kinase family. STKL subfamily.

It is found in the endoplasmic reticulum membrane. It catalyses the reaction 3-O-[beta-D-GalNAc-(1-&gt;3)-beta-D-GlcNAc-(1-&gt;4)-alpha-D-Man]-L-Thr-[protein] + ATP = 3-O-[beta-D-GalNAc-(1-&gt;3)-beta-D-GlcNAc-(1-&gt;4)-(O-6-P-alpha-D-Man)]-Thr-[protein] + ADP + H(+). Its function is as follows. Protein O-mannose kinase that specifically mediates phosphorylation at the 6-position of an O-mannose of the trisaccharide (N-acetylgalactosamine (GalNAc)-beta-1,3-N-acetylglucosamine (GlcNAc)-beta-1,4-mannose) to generate phosphorylated O-mannosyl trisaccharide (N-acetylgalactosamine-beta-1,3-N-acetylglucosamine-beta-1,4-(phosphate-6-)mannose). Phosphorylated O-mannosyl trisaccharide is a carbohydrate structure present in alpha-dystroglycan (DAG1), which is required for binding laminin G-like domain-containing extracellular proteins with high affinity. Only shows kinase activity when the GalNAc-beta-3-GlcNAc-beta-terminus is linked to the 4-position of O-mannose, suggesting that this disaccharide serves as the substrate recognition motif. The sequence is that of Protein O-mannose kinase (POMK) from Gallus gallus (Chicken).